Reading from the N-terminus, the 315-residue chain is Polyprenyl transferase mpaA (315 aa).

8 helical membrane-spanning segments follow: residues 40-60, 84-103, 118-135, 143-163, 174-194, 224-244, 248-268, and 279-299; these read IEFI…LCGA, LASG…GQYF, IWSL…YPYL, VFVY…ITGW, GDII…CVYF, LFLA…ISTI, WLWV…IAQF, and IHWD…VEVG.

It belongs to the UbiA prenyltransferase family. It depends on Mg(2+) as a cofactor.

The protein localises to the golgi apparatus membrane. It catalyses the reaction 5,7-dihydroxy-4-methylphthalide + (2E,6E)-farnesyl diphosphate = 4-farnesyl-3,5-dihydroxy-6-methylphthalide + diphosphate. It participates in secondary metabolite biosynthesis; terpenoid biosynthesis. Its function is as follows. Polyprenyl transferase; part of the gene cluster that mediates the biosynthesis of mycophenolic acid (MPA), the first isolated antibiotic natural product in the world obtained from a culture of Penicillium brevicompactum in 1893. MpaA is a Golgi apparatus-associated enzyme that catalyzes the prenylation of 5,7-dihydroxy-4,6-dimethylphthalide (DHMP) to yield farnesyl-DHMP (FDHMP). The first step of the pathway is the synthesis of 5-methylorsellinic acid (5MOA) by the cytosolic polyketide synthase mpaC. 5MOA is then converted to the phthalide compound 5,7-dihydroxy-4,6-dimethylphthalide (DHMP) by the endoplasmic reticulum-bound cytochrome P450 monooxygenase mpaDE. MpaDE first catalyzes hydroxylation of 5-MOA to 4,6-dihydroxy-2-(hydroxymethyl)-3-methylbenzoic acid (DHMB). MpaDE then acts as a lactone synthase that catalyzes the ring closure to convert DHMB into DHMP. The next step is the prenylation of DHMP by the Golgi apparatus-associated prenyltransferase mpaA to yield farnesyl-DHMP (FDHMP). The ER-bound oxygenase mpaB then mediates the oxidative cleavage the C19-C20 double bond in FDHMP to yield FDHMP-3C via a mycophenolic aldehyde intermediate. The O-methyltransferase mpaG catalyzes the methylation of FDHMP-3C to yield MFDHMP-3C. After the cytosolic methylation of FDHMP-3C, MFDHMP-3C enters into peroxisomes probably via free diffusion due to its low molecular weight. Upon a peroxisomal CoA ligation reaction, catalyzed by a beta-oxidation component enzyme acyl-CoA ligase ACL891, MFDHMP-3C-CoA would then be restricted to peroxisomes for the following beta-oxidation pathway steps. The peroxisomal beta-oxidation machinery than converts MFDHMP-3C-CoA into MPA_CoA, via a beta-oxidation chain-shortening process. Finally mpaH acts as a peroxisomal acyl-CoA hydrolase with high substrate specificity toward MPA-CoA to release the final product MPA. This Penicillium brevicompactum protein is Polyprenyl transferase mpaA.